We begin with the raw amino-acid sequence, 446 residues long: N-succinylarginine dihydrolase (446 aa).

Substrate contacts are provided by residues 19-28, N110, and 137-138; these read AGLSFGNVAS and HR. The active site involves E174. R213 is a binding site for substrate. H249 is an active-site residue. Positions 251 and 364 each coordinate substrate. Catalysis depends on C370, which acts as the Nucleophile.

The protein belongs to the succinylarginine dihydrolase family. Homodimer.

It carries out the reaction N(2)-succinyl-L-arginine + 2 H2O + 2 H(+) = N(2)-succinyl-L-ornithine + 2 NH4(+) + CO2. The protein operates within amino-acid degradation; L-arginine degradation via AST pathway; L-glutamate and succinate from L-arginine: step 2/5. In terms of biological role, catalyzes the hydrolysis of N(2)-succinylarginine into N(2)-succinylornithine, ammonia and CO(2). The protein is N-succinylarginine dihydrolase of Burkholderia ambifaria (strain ATCC BAA-244 / DSM 16087 / CCUG 44356 / LMG 19182 / AMMD) (Burkholderia cepacia (strain AMMD)).